The chain runs to 77 residues: Conotoxin CaHr91 (77 aa).

Residues 1–19 (MKLTCALIITVLFLSITAD) form the signal peptide. The propeptide occupies 20–43 (DSRGKQGYRALKSIAGMLNSKTVR). 3 disulfide bridges follow: C45-C60, C52-C65, and C59-C74.

This sequence belongs to the conotoxin O1 superfamily. Expressed by the venom duct.

It is found in the secreted. The protein is Conotoxin CaHr91 of Conus capitaneus (Captain cone).